The chain runs to 675 residues: Putative acyl-coenzyme A oxidase 3.2, peroxisomal (675 aa).

The transit peptide at 1–34 directs the protein to the peroxisome; it reads MSENVELRRAHILANHILRSPRPSSNPSLTPEVC. 442–457 provides a ligand contact to FAD; it reads AVGGQGLKTENRVGHL.

The protein belongs to the acyl-CoA oxidase family. It depends on FAD as a cofactor.

The protein localises to the peroxisome. The catalysed reaction is a 2,3-saturated acyl-CoA + O2 = a (2E)-enoyl-CoA + H2O2. Catalyzes the desaturation of acyl-CoAs to 2-trans-enoyl-CoAs. In Arabidopsis thaliana (Mouse-ear cress), this protein is Putative acyl-coenzyme A oxidase 3.2, peroxisomal (ACX3.2).